We begin with the raw amino-acid sequence, 139 residues long: Gene 22 protein (139 aa).

The sequence is that of Gene 22 protein (22) from Mycobacterium phage D29 (Mycobacteriophage D29).